The following is a 192-amino-acid chain: Pyridoxal 5'-phosphate synthase subunit PdxT (192 aa).

L-glutamine is bound at residue glycine 47–serine 49. Cysteine 78 serves as the catalytic Nucleophile. Residues arginine 105 and isoleucine 139–arginine 140 each bind L-glutamine. Residues histidine 175 and glutamate 177 each act as charge relay system in the active site.

It belongs to the glutaminase PdxT/SNO family. In terms of assembly, in the presence of PdxS, forms a dodecamer of heterodimers. Only shows activity in the heterodimer.

It carries out the reaction aldehydo-D-ribose 5-phosphate + D-glyceraldehyde 3-phosphate + L-glutamine = pyridoxal 5'-phosphate + L-glutamate + phosphate + 3 H2O + H(+). The enzyme catalyses L-glutamine + H2O = L-glutamate + NH4(+). The protein operates within cofactor biosynthesis; pyridoxal 5'-phosphate biosynthesis. Its function is as follows. Catalyzes the hydrolysis of glutamine to glutamate and ammonia as part of the biosynthesis of pyridoxal 5'-phosphate. The resulting ammonia molecule is channeled to the active site of PdxS. This chain is Pyridoxal 5'-phosphate synthase subunit PdxT, found in Solibacter usitatus (strain Ellin6076).